An 84-amino-acid polypeptide reads, in one-letter code: Beta-defensin 119 (84 aa).

Residues 1–21 (MKLLYLFLAILLAIEEPVISG) form the signal peptide. 3 cysteine pairs are disulfide-bonded: Cys-28/Cys-55, Cys-35/Cys-49, and Cys-39/Cys-56.

The protein belongs to the beta-defensin family.

The protein localises to the secreted. In terms of biological role, has antibacterial activity. This chain is Beta-defensin 119 (DEFB119), found in Gorilla gorilla gorilla (Western lowland gorilla).